A 123-amino-acid chain; its full sequence is Small ribosomal subunit protein uS12 (123 aa).

A disordered region spans residues 1-25; sequence MPTINQLVRKPRKSRSALNKAPALQ. At Asp90 the chain carries 3-methylthioaspartic acid.

It belongs to the universal ribosomal protein uS12 family. As to quaternary structure, part of the 30S ribosomal subunit. Contacts proteins S8 and S17. May interact with IF1 in the 30S initiation complex.

In terms of biological role, with S4 and S5 plays an important role in translational accuracy. Its function is as follows. Interacts with and stabilizes bases of the 16S rRNA that are involved in tRNA selection in the A site and with the mRNA backbone. Located at the interface of the 30S and 50S subunits, it traverses the body of the 30S subunit contacting proteins on the other side and probably holding the rRNA structure together. The combined cluster of proteins S8, S12 and S17 appears to hold together the shoulder and platform of the 30S subunit. This is Small ribosomal subunit protein uS12 from Ehrlichia canis (strain Jake).